The primary structure comprises 122 residues: Large ribosomal subunit protein uL22 (122 aa).

Positions 102–122 (VAEGKEMKSSKSHKKNQAEGK) are disordered.

This sequence belongs to the universal ribosomal protein uL22 family. In terms of assembly, part of the 50S ribosomal subunit.

Its function is as follows. This protein binds specifically to 23S rRNA; its binding is stimulated by other ribosomal proteins, e.g. L4, L17, and L20. It is important during the early stages of 50S assembly. It makes multiple contacts with different domains of the 23S rRNA in the assembled 50S subunit and ribosome. Functionally, the globular domain of the protein is located near the polypeptide exit tunnel on the outside of the subunit, while an extended beta-hairpin is found that lines the wall of the exit tunnel in the center of the 70S ribosome. In Helicobacter pylori (strain G27), this protein is Large ribosomal subunit protein uL22.